A 324-amino-acid polypeptide reads, in one-letter code: Adenosine kinase (324 aa).

Substrate-binding positions include Ser-8, Asp-12, Ser-36, Gly-48, Asn-52, Phe-102, Phe-116, and Gln-172–Gln-173. ATP is bound by residues Asn-195, Thr-223–Gly-228, and Gly-256. Asp-257 is a substrate binding site. The Proton acceptor role is filled by Asp-257.

It belongs to the carbohydrate kinase PfkB family. Homodimer. It depends on Mg(2+) as a cofactor.

The catalysed reaction is adenosine + ATP = AMP + ADP + H(+). It carries out the reaction adenosine + GTP = GDP + AMP + H(+). It catalyses the reaction dGTP + adenosine = dGDP + AMP + H(+). Its pathway is purine metabolism; AMP biosynthesis via salvage pathway; AMP from adenosine: step 1/1. Functionally, catalyzes the phosphorylation of adenosine to adenosine monophosphate (AMP). Prefers dGTP and GTP to ATP as phosphate donors in vitro. This is Adenosine kinase (adoK) from Mycobacterium bovis (strain ATCC BAA-935 / AF2122/97).